A 486-amino-acid chain; its full sequence is Glutamate--tRNA ligase (486 aa).

A 'HIGH' region motif is present at residues 11–21 (PSPTGLLHIGN). Residues 255–259 (KLSKR) carry the 'KMSKS' region motif. K258 contributes to the ATP binding site.

The protein belongs to the class-I aminoacyl-tRNA synthetase family. Glutamate--tRNA ligase type 1 subfamily. In terms of assembly, monomer.

Its subcellular location is the cytoplasm. It catalyses the reaction tRNA(Glu) + L-glutamate + ATP = L-glutamyl-tRNA(Glu) + AMP + diphosphate. Functionally, catalyzes the attachment of glutamate to tRNA(Glu) in a two-step reaction: glutamate is first activated by ATP to form Glu-AMP and then transferred to the acceptor end of tRNA(Glu). This Streptococcus pneumoniae serotype 19F (strain G54) protein is Glutamate--tRNA ligase.